Here is an 842-residue protein sequence, read N- to C-terminus: Alpha-glucan phosphorylase, H isozyme (842 aa).

The residue at position 688 (Lys-688) is an N6-(pyridoxal phosphate)lysine.

Belongs to the glycogen phosphorylase family. The cofactor is pyridoxal 5'-phosphate.

It is found in the cytoplasm. It catalyses the reaction [(1-&gt;4)-alpha-D-glucosyl](n) + phosphate = [(1-&gt;4)-alpha-D-glucosyl](n-1) + alpha-D-glucose 1-phosphate. Its function is as follows. Phosphorylase is an important allosteric enzyme in carbohydrate metabolism. Enzymes from different sources differ in their regulatory mechanisms and in their natural substrates. However, all known phosphorylases share catalytic and structural properties. In terms of biological role, the H isoform exhibits higher affinity for branched polyglucans such as soluble starch or glycogen. In Vicia faba (Broad bean), this protein is Alpha-glucan phosphorylase, H isozyme.